Reading from the N-terminus, the 43-residue chain is uncharacterized protein (43 aa).

Composition is skewed to polar residues over residues 1-19 (MSQK…SGAS) and 33-43 (PENSISKTFSK). Positions 1-43 (MSQKLSFFQQNTRNGSGASRTLVIKPPTIQPKPENSISKTFSK) are disordered.

This is an uncharacterized protein from Dictyostelium discoideum (Social amoeba).